Consider the following 195-residue polypeptide: Keratin-associated protein 4-11 (195 aa).

Repeat copies occupy residues 5 to 9 (CCGSV), 24 to 28 (CCRPS), 29 to 33 (CCETT), 34 to 38 (CCRTT), 44 to 48 (CCVSS), 49 to 53 (CCRPQ), 54 to 58 (CCQSV), 59 to 63 (CCQPT), 64 to 68 (CCRPR), 69 to 73 (CCISS), 74 to 78 (CCRPS), 79 to 83 (CCVSS), 84 to 88 (CCKPQ), 89 to 93 (CCQSM), 94 to 98 (CCQPT), 99 to 103 (CCRPR), 104 to 108 (CCISS), 109 to 113 (CCRPS), 114 to 118 (CCVSS), 119 to 123 (CCRPQ), 124 to 128 (CCQSV), 129 to 133 (CCQPT), 134 to 138 (CCHPS), 144 to 148 (CCRPS), 149 to 153 (CCESS), 154 to 158 (CCRPC), and 159 to 163 (CCLRP). Residues 5 to 163 (CCGSVCSHQG…CCRPCCCLRP (159 aa)) are 27 X 5 AA repeats of C-C-[GIKRQVHEL]-[SPTR]-[STVQRMC].

It belongs to the KRTAP type 4 family. Interacts with hair keratins. As to expression, expressed in the hair follicles.

In terms of biological role, in the hair cortex, hair keratin intermediate filaments are embedded in an interfilamentous matrix, consisting of hair keratin-associated proteins (KRTAP), which are essential for the formation of a rigid and resistant hair shaft through their extensive disulfide bond cross-linking with abundant cysteine residues of hair keratins. The matrix proteins include the high-sulfur and high-glycine-tyrosine keratins. This Homo sapiens (Human) protein is Keratin-associated protein 4-11 (KRTAP4-11).